The sequence spans 465 residues: Box C/D snoRNA protein 1 (465 aa).

Residues methionine 1–proline 72 are disordered. Serine 25 is subject to Phosphoserine. Basic and acidic residues predominate over residues glutamate 56–glutamate 70. Glycyl lysine isopeptide (Lys-Gly) (interchain with G-Cter in SUMO2) cross-links involve residues lysine 79, lysine 108, lysine 118, lysine 138, lysine 148, lysine 157, lysine 168, lysine 178, and lysine 195. Zn(2+)-binding residues include cysteine 215, cysteine 218, cysteine 227, cysteine 230, cysteine 235, cysteine 239, histidine 243, and cysteine 249. The segment at cysteine 215–cysteine 249 adopts an HIT-type zinc-finger fold. Lysine 454 participates in a covalent cross-link: Glycyl lysine isopeptide (Lys-Gly) (interchain with G-Cter in SUMO2).

Belongs to the BCD1 family. As to quaternary structure, interacts with FBL, SNU13, NOP58, NUFIP1, RUVBL1, RUVBL2 and TAF9. Interacts (via HIT-type zinc finger) with the RUVBL1/RUVBL2 complex in the presence of ADP.

Functionally, required for box C/D snoRNAs accumulation involved in snoRNA processing, snoRNA transport to the nucleolus and ribosome biogenesis. This is Box C/D snoRNA protein 1 (ZNHIT6) from Pongo abelii (Sumatran orangutan).